Reading from the N-terminus, the 356-residue chain is Tyrosine recombinase XerS (356 aa).

Residues 16 to 121 (TMPWYILEYY…ALSSLYKYLT (106 aa)) form the Core-binding (CB) domain. The region spanning 169–354 (EFLQYIDREY…VNDEQKNALN (186 aa)) is the Tyr recombinase domain. Catalysis depends on residues Arg-210, Lys-234, His-306, Arg-309, and His-332. The O-(3'-phospho-DNA)-tyrosine intermediate role is filled by Tyr-341.

This sequence belongs to the 'phage' integrase family. XerS subfamily.

Its subcellular location is the cytoplasm. Its activity is regulated as follows. FtsK is required for recombination. Site-specific tyrosine recombinase, which acts by catalyzing the cutting and rejoining of the recombining DNA molecules. Essential to convert dimers of the bacterial chromosome into monomers to permit their segregation at cell division. This chain is Tyrosine recombinase XerS, found in Streptococcus gordonii (strain Challis / ATCC 35105 / BCRC 15272 / CH1 / DL1 / V288).